A 492-amino-acid chain; its full sequence is Ribose import ATP-binding protein RbsA (492 aa).

ABC transporter domains follow at residues 3-239 (IDMR…VGRK) and 238-492 (RKLE…TGGK). Residue 35-42 (GENGAGKS) coordinates ATP.

Belongs to the ABC transporter superfamily. Ribose importer (TC 3.A.1.2.1) family. As to quaternary structure, the complex is composed of an ATP-binding protein (RbsA), two transmembrane proteins (RbsC) and a solute-binding protein (RbsB).

Its subcellular location is the cell membrane. It catalyses the reaction D-ribose(out) + ATP + H2O = D-ribose(in) + ADP + phosphate + H(+). Functionally, part of the ABC transporter complex RbsABC involved in ribose import. Responsible for energy coupling to the transport system. The chain is Ribose import ATP-binding protein RbsA from Streptococcus agalactiae serotype Ia (strain ATCC 27591 / A909 / CDC SS700).